The following is a 350-amino-acid chain: Methionine import ATP-binding protein MetN (350 aa).

One can recognise an ABC transporter domain in the interval 2–241 (IQIKNLKKEY…PQAPVTRSFV (240 aa)). 38–45 (GHSGAGKS) provides a ligand contact to ATP.

The protein belongs to the ABC transporter superfamily. Methionine importer (TC 3.A.1.24) family. In terms of assembly, the complex is composed of two ATP-binding proteins (MetN), two transmembrane proteins (MetI) and a solute-binding protein (MetQ).

It is found in the cell inner membrane. It catalyses the reaction L-methionine(out) + ATP + H2O = L-methionine(in) + ADP + phosphate + H(+). The enzyme catalyses D-methionine(out) + ATP + H2O = D-methionine(in) + ADP + phosphate + H(+). Its function is as follows. Part of the ABC transporter complex MetNIQ involved in methionine import. Responsible for energy coupling to the transport system. In Francisella tularensis subsp. holarctica (strain LVS), this protein is Methionine import ATP-binding protein MetN.